The chain runs to 93 residues: Large ribosomal subunit protein bL27 (93 aa).

Residues 1–9 (MLQLNLQFF) constitute a propeptide that is removed on maturation. Residues 14 to 33 (GVGSTKNGRDSISKRLGAKR) are disordered.

The protein belongs to the bacterial ribosomal protein bL27 family. Post-translationally, the N-terminus is cleaved by ribosomal processing cysteine protease Prp.

This Exiguobacterium sp. (strain ATCC BAA-1283 / AT1b) protein is Large ribosomal subunit protein bL27.